The primary structure comprises 199 residues: V-set and transmembrane domain-containing protein 5 (199 aa).

An N-terminal signal peptide occupies residues 1–27; sequence MRPLRCGERTQGIPLGLLAFWVTAARC. Residues 28–146 are Extracellular-facing; it reads LQSQGVSLYI…VSEIRYEDLH (119 aa). The region spanning 35-138 is the Ig-like C2-type domain; sequence LYIPQSAINA…QSGTILLRVS (104 aa). N-linked (GlcNAc...) asparagine glycans are attached at residues asparagine 43, asparagine 87, and asparagine 101. A helical membrane pass occupies residues 147–167; the sequence is FVAVFFALLAAVAVVLISLMW. Topologically, residues 168-199 are cytoplasmic; it reads VCNQCAYKFQRKRRYKLKESTTEEIEMKEVEC. The tract at residues 169-185 is important for CDC42-dependent filopodia induction; that stretch reads CNQCAYKFQRKRRYKLK.

Can homooligomerize through cis interactions within the same cell membrane. N-glycosylated. Highly expressed in the central nervous system (CNS), with the highest expression in thalamus, hippocampus, cerebrum, midbrain and spinal cord. Also highly expressed in stomach, kidney and small intestine.

It localises to the cell membrane. The protein localises to the cell projection. It is found in the dendrite. The protein resides in the axon. Functionally, cell adhesion-like membrane protein of the central nervous system (CNS) which modulates both the position and complexity of central neurons by altering their membrane morphology and dynamics. Involved in the formation of neuronal dendrites and protrusions including dendritic filopodia. In synaptogenesis, regulates synapse formation by altering dendritic spine morphology and actin distribution. Promotes formation of unstable neuronal spines such as thin and branched types. Regulates neuronal morphogenesis and migration during cortical development in the brain. The polypeptide is V-set and transmembrane domain-containing protein 5 (Mus musculus (Mouse)).